A 113-amino-acid polypeptide reads, in one-letter code: Large ribosomal subunit protein uL22 (113 aa).

It belongs to the universal ribosomal protein uL22 family. Part of the 50S ribosomal subunit.

Its function is as follows. This protein binds specifically to 23S rRNA; its binding is stimulated by other ribosomal proteins, e.g. L4, L17, and L20. It is important during the early stages of 50S assembly. It makes multiple contacts with different domains of the 23S rRNA in the assembled 50S subunit and ribosome. The globular domain of the protein is located near the polypeptide exit tunnel on the outside of the subunit, while an extended beta-hairpin is found that lines the wall of the exit tunnel in the center of the 70S ribosome. The sequence is that of Large ribosomal subunit protein uL22 from Symbiobacterium thermophilum (strain DSM 24528 / JCM 14929 / IAM 14863 / T).